Reading from the N-terminus, the 131-residue chain is UPF0146 protein PYRAB01940 (131 aa).

This sequence belongs to the UPF0146 family.

This chain is UPF0146 protein PYRAB01940, found in Pyrococcus abyssi (strain GE5 / Orsay).